A 740-amino-acid polypeptide reads, in one-letter code: ATP-dependent RNA helicase DDX1 (740 aa).

Residues 1–295 form a necessary for interaction with HNRNPK region; that stretch reads MAAFSEMGVM…APKALIVEPS (295 aa). Positions 1–448 are interaction with dsRNA; that stretch reads MAAFSEMGVM…DTVHHVVVPV (448 aa). The necessary for interaction with RELA stretch occupies residues 1–525; the sequence is MAAFSEMGVM…KIDCDNLEQY (525 aa). Residues 2–428 enclose the Helicase ATP-binding domain; that stretch reads AAFSEMGVMP…SEKIMHFPTW (427 aa). 46-53 is an ATP binding site; that stretch reads AETGSGKT. Residues 70-247 enclose the B30.2/SPRY domain; the sequence is DQQEGKKGKT…LKFNFGEEEF (178 aa). 2 positions are modified to N6-acetyllysine: K239 and K268. N6-acetyllysine; alternate is present on K281. K281 is covalently cross-linked (Glycyl lysine isopeptide (Lys-Gly) (interchain with G-Cter in SUMO2); alternate). A DEAD box motif is present at residues 370–373; the sequence is DEAD. S481 is subject to Phosphoserine. The 189-residue stretch at 493–681 folds into the Helicase C-terminal domain; that stretch reads KGEYAVRAIK…QVEPDIKVPV (189 aa). The segment at 525–740 is necessary for interaction with HNRNPK; it reads YFMQQGGGPD…YLPNQLFRTF (216 aa).

The protein belongs to the DEAD box helicase family. DDX1 subfamily. Found in a multi-helicase-TICAM1 complex at least composed of DHX36, DDX1, DDX21 and TICAM1; this complex exists in resting cells with or without poly(I:C) RNA ligand stimulation. Interacts with DHX36. Interacts (via B30.2/SPRY domain) with DDX21 (via N-terminus); this interaction serves as bridges to TICAM1. Interacts with FAM98A (via N- and C-terminus). Interacts with MBNL1. Interacts with CSTF2. Interacts with HNRNPK. Interacts with ATM. Interacts with RELA (via C-terminus). Component of the tRNA-splicing ligase complex. Interacts with PHF5A (via C-terminus). Interacts with PQBP1. Interacts with ERCC6. In terms of processing, phosphorylated by ATM kinase; phosphorylation is increased in response to ionizing radiation (IR). In terms of tissue distribution, testis-specific. Expressed in the germ line stem cells, spermatogonia and spermatocytes of the testis. Also expressed in the seminoma and nonseminoma types of testicular germ cell tumors (TGCTs) (at protein level).

The protein localises to the nucleus. Its subcellular location is the cytoplasm. It is found in the cytosol. The protein resides in the cytoplasmic granule. It localises to the mitochondrion. It carries out the reaction ATP + H2O = ADP + phosphate + H(+). Its function is as follows. Acts as an ATP-dependent RNA helicase, able to unwind both RNA-RNA and RNA-DNA duplexes. Possesses 5' single-stranded RNA overhang nuclease activity. Possesses ATPase activity on various RNA, but not DNA polynucleotides. May play a role in RNA clearance at DNA double-strand breaks (DSBs), thereby facilitating the template-guided repair of transcriptionally active regions of the genome. Together with RELA, acts as a coactivator to enhance NF-kappa-B-mediated transcriptional activation. Acts as a positive transcriptional regulator of cyclin CCND2 expression. Binds to the cyclin CCND2 promoter region. Associates with chromatin at the NF-kappa-B promoter region via association with RELA. Binds to poly(A) RNA. May be involved in 3'-end cleavage and polyadenylation of pre-mRNAs. Component of the tRNA-splicing ligase complex required to facilitate the enzymatic turnover of catalytic subunit RTCB: together with archease (ZBTB8OS), acts by facilitating the guanylylation of RTCB, a key intermediate step in tRNA ligation. Component of a multi-helicase-TICAM1 complex that acts as a cytoplasmic sensor of viral double-stranded RNA (dsRNA) and plays a role in the activation of a cascade of antiviral responses including the induction of pro-inflammatory cytokines via the adapter molecule TICAM1. Specifically binds (via helicase ATP-binding domain) on both short and long poly(I:C) dsRNA. The chain is ATP-dependent RNA helicase DDX1 (Ddx1) from Mus musculus (Mouse).